The chain runs to 728 residues: Catalase-peroxidase 2 (728 aa).

Residues methionine 1 to arginine 20 form a disordered region. The tryptophyl-tyrosyl-methioninium (Trp-Tyr) (with M-240) cross-link spans tryptophan 91 to tyrosine 214. The active-site Proton acceptor is the histidine 92. The tryptophyl-tyrosyl-methioninium (Tyr-Met) (with W-91) cross-link spans tyrosine 214 to methionine 240. Histidine 255 serves as a coordination point for heme b. Residues alanine 335–proline 355 form a disordered region.

This sequence belongs to the peroxidase family. Peroxidase/catalase subfamily. As to quaternary structure, homodimer or homotetramer. Heme b is required as a cofactor. Formation of the three residue Trp-Tyr-Met cross-link is important for the catalase, but not the peroxidase activity of the enzyme.

The enzyme catalyses H2O2 + AH2 = A + 2 H2O. It carries out the reaction 2 H2O2 = O2 + 2 H2O. Its function is as follows. Bifunctional enzyme with both catalase and broad-spectrum peroxidase activity. In Burkholderia cenocepacia (strain HI2424), this protein is Catalase-peroxidase 2.